We begin with the raw amino-acid sequence, 161 residues long: 2-C-methyl-D-erythritol 2,4-cyclodiphosphate synthase (161 aa).

A divalent metal cation is bound by residues Asp11 and His13. 4-CDP-2-C-methyl-D-erythritol 2-phosphate contacts are provided by residues 11–13 (DIH) and 37–38 (HS). Residue His45 participates in a divalent metal cation binding. Residues 59-61 (DIG), 135-138 (TTNE), and Arg145 each bind 4-CDP-2-C-methyl-D-erythritol 2-phosphate.

Belongs to the IspF family. As to quaternary structure, homotrimer. It depends on a divalent metal cation as a cofactor.

The enzyme catalyses 4-CDP-2-C-methyl-D-erythritol 2-phosphate = 2-C-methyl-D-erythritol 2,4-cyclic diphosphate + CMP. It participates in isoprenoid biosynthesis; isopentenyl diphosphate biosynthesis via DXP pathway; isopentenyl diphosphate from 1-deoxy-D-xylulose 5-phosphate: step 4/6. Its function is as follows. Involved in the biosynthesis of isopentenyl diphosphate (IPP) and dimethylallyl diphosphate (DMAPP), two major building blocks of isoprenoid compounds. Catalyzes the conversion of 4-diphosphocytidyl-2-C-methyl-D-erythritol 2-phosphate (CDP-ME2P) to 2-C-methyl-D-erythritol 2,4-cyclodiphosphate (ME-CPP) with a corresponding release of cytidine 5-monophosphate (CMP). In Thermosynechococcus vestitus (strain NIES-2133 / IAM M-273 / BP-1), this protein is 2-C-methyl-D-erythritol 2,4-cyclodiphosphate synthase.